A 105-amino-acid polypeptide reads, in one-letter code: SAGA-associated factor 11 (105 aa).

The SGF11-type zinc-finger motif lies at phenylalanine 76–cysteine 97.

The protein belongs to the SGF11 family. As to quaternary structure, component of the 1.8 MDa SAGA transcription coactivator-HAT complex. SAGA is built of 5 distinct domains with specialized functions. Within the SAGA complex, SUS1, SGF11, SGF73 and UBP8 form an additional subcomplex of SAGA called the DUB module (deubiquitination module). Interacts directly with SGF73, SUS1 and UBP8.

It is found in the nucleus. In terms of biological role, functions as a component of the transcription regulatory histone acetylation (HAT) complex SAGA. At the promoters, SAGA is required for recruitment of the basal transcription machinery. It influences RNA polymerase II transcriptional activity through different activities such as TBP interaction and promoter selectivity, interaction with transcription activators, and chromatin modification through histone acetylation and deubiquitination. SAGA acetylates nucleosomal histone H3 to some extent (to form H3K9ac, H3K14ac, H3K18ac and H3K23ac). SAGA interacts with DNA via upstream activating sequences (UASs). Involved in transcriptional regulation of a subset of SAGA-regulated genes. Within the SAGA complex, participates in a subcomplex, that specifically deubiquitinates histones H2B. This is SAGA-associated factor 11 from Eremothecium gossypii (strain ATCC 10895 / CBS 109.51 / FGSC 9923 / NRRL Y-1056) (Yeast).